Reading from the N-terminus, the 482-residue chain is tRNA sulfurtransferase (482 aa).

Residues 61-165 form the THUMP domain; the sequence is SAIRDALTRI…QDRLLLIKGR (105 aa). Residues 183 to 184, K265, G287, and Q296 contribute to the ATP site; that span reads LI. C344 and C456 form a disulfide bridge. Positions 404–482 constitute a Rhodanese domain; sequence FAPTDVLLDI…GFSNVKVYRP (79 aa). C456 acts as the Cysteine persulfide intermediate in catalysis.

It belongs to the ThiI family.

The protein resides in the cytoplasm. It carries out the reaction [ThiI sulfur-carrier protein]-S-sulfanyl-L-cysteine + a uridine in tRNA + 2 reduced [2Fe-2S]-[ferredoxin] + ATP + H(+) = [ThiI sulfur-carrier protein]-L-cysteine + a 4-thiouridine in tRNA + 2 oxidized [2Fe-2S]-[ferredoxin] + AMP + diphosphate. It catalyses the reaction [ThiS sulfur-carrier protein]-C-terminal Gly-Gly-AMP + S-sulfanyl-L-cysteinyl-[cysteine desulfurase] + AH2 = [ThiS sulfur-carrier protein]-C-terminal-Gly-aminoethanethioate + L-cysteinyl-[cysteine desulfurase] + A + AMP + 2 H(+). It functions in the pathway cofactor biosynthesis; thiamine diphosphate biosynthesis. Catalyzes the ATP-dependent transfer of a sulfur to tRNA to produce 4-thiouridine in position 8 of tRNAs, which functions as a near-UV photosensor. Also catalyzes the transfer of sulfur to the sulfur carrier protein ThiS, forming ThiS-thiocarboxylate. This is a step in the synthesis of thiazole, in the thiamine biosynthesis pathway. The sulfur is donated as persulfide by IscS. The sequence is that of tRNA sulfurtransferase from Pectobacterium carotovorum subsp. carotovorum (strain PC1).